Here is a 431-residue protein sequence, read N- to C-terminus: MFVDQVKINVKAGNGGNGMVAFRREKFVPNGGPAGGDGGRGGNVVFVVDEGLRTLMDFRYQRKFKAKSGGNGAIKSMTGRGAEDTIIKVPQGTTIMDAETDQVIGDLVAPDDSVIVAHGGRGGRGNIHFASPKNPAPEIAENGEPGEEREIRLELKVLADVGLVGFPSVGKSTLLSTVTSAKPKIAEYHFTTLVPNLGMVRLPDGRDFVMADLPGLIEGAANGVGLGFQFLRHVERTRVILHLIDMSGLEGRTPYDDFEKINQELQTYDPDILKRPQIVVANKMDMPDSAENLAQFKEDLKQDTLLAQTPEIFAVSALTHDGLTPLLQRTADMLAETPQFPVKQPEVATTAEYNFQPEAEFTLNQDADGTWILGGDKLVKLFKMTDVNHEESLLRFARQMRGMGVDDSLREHGAKNGDLVKIDDFTFEYMA.

Positions 1-158 (MFVDQVKINV…REIRLELKVL (158 aa)) constitute an Obg domain. Positions 125 to 145 (GNIHFASPKNPAPEIAENGEP) are disordered. Positions 159 to 335 (ADVGLVGFPS…LLQRTADMLA (177 aa)) constitute an OBG-type G domain. GTP is bound by residues 165-172 (GFPSVGKS), 190-194 (FTTLV), 212-215 (DLPG), 282-285 (NKMD), and 316-318 (SAL). Positions 172 and 192 each coordinate Mg(2+). One can recognise an OCT domain in the interval 353–431 (YNFQPEAEFT…IDDFTFEYMA (79 aa)).

The protein belongs to the TRAFAC class OBG-HflX-like GTPase superfamily. OBG GTPase family. As to quaternary structure, monomer. Requires Mg(2+) as cofactor.

The protein localises to the cytoplasm. An essential GTPase which binds GTP, GDP and possibly (p)ppGpp with moderate affinity, with high nucleotide exchange rates and a fairly low GTP hydrolysis rate. Plays a role in control of the cell cycle, stress response, ribosome biogenesis and in those bacteria that undergo differentiation, in morphogenesis control. The protein is GTPase Obg of Levilactobacillus brevis (strain ATCC 367 / BCRC 12310 / CIP 105137 / JCM 1170 / LMG 11437 / NCIMB 947 / NCTC 947) (Lactobacillus brevis).